Consider the following 417-residue polypeptide: Ig-like V-type domain-containing protein FAM187A (417 aa).

Positions 1–18 are cleaved as a signal peptide; sequence MSLAHTTVLLWAWGSLQA. The Extracellular portion of the chain corresponds to 19–377; sequence FEIVEKESVF…ASLSDPETRT (359 aa). N-linked (GlcNAc...) asparagine glycosylation is found at Asn248 and Asn318. Residues 268–362 enclose the Ig-like V-type domain; sequence PWVPQVPIQF…IAGFRLGVIT (95 aa). An intrachain disulfide couples Cys290 to Cys346. Residues 378–398 traverse the membrane as a helical segment; sequence AIELTLMGYLLITIFFITIHL. At 399–417 the chain is on the cytoplasmic side; the sequence is CRCCCQSRCCPNFSAQTLL.

The protein belongs to the FAM187 family.

Its subcellular location is the membrane. This is Ig-like V-type domain-containing protein FAM187A (Fam187a) from Mus musculus (Mouse).